The sequence spans 538 residues: Phosphoenolpyruvate carboxykinase (ATP) (538 aa).

Arg64, Tyr205, and Lys211 together coordinate substrate. ATP-binding positions include Lys211, His230, and 246–254 (GLSGTGKTT). 2 residues coordinate Mn(2+): Lys211 and His230. Residue Asp267 participates in Mn(2+) binding. ATP is bound by residues Glu295, Arg331, 447-448 (RI), and Thr453. Position 331 (Arg331) interacts with substrate.

This sequence belongs to the phosphoenolpyruvate carboxykinase (ATP) family. In terms of assembly, monomer. Requires Mn(2+) as cofactor.

The protein localises to the cytoplasm. The enzyme catalyses oxaloacetate + ATP = phosphoenolpyruvate + ADP + CO2. It participates in carbohydrate biosynthesis; gluconeogenesis. Functionally, involved in the gluconeogenesis. Catalyzes the conversion of oxaloacetate (OAA) to phosphoenolpyruvate (PEP) through direct phosphoryl transfer between the nucleoside triphosphate and OAA. The protein is Phosphoenolpyruvate carboxykinase (ATP) of Baumannia cicadellinicola subsp. Homalodisca coagulata.